A 238-amino-acid polypeptide reads, in one-letter code: MNIPDPQLVIALDFDTQESCLELVDQLDPTLCRLKIGKELFTSCGPKIVEKIQWKGFDVFLDLKFHDIPNTVAKAVKAAAELGVWMVNVHASGGEKMMLAAREALEGYQVKPLLIAVTVLTSMSDEDLKALGITVTAAEQVQRLAALAKQAQMDGVVCSAQEVVQLKASLGEEFKMITPGIRPSFAGNDDQTRIMTPEQALKAGSDYLVVGRPVTQADDPLRALEQIAAEMARASLGS.

Substrate is bound by residues aspartate 13, lysine 35, 62 to 71, threonine 121, arginine 182, glutamine 191, glycine 211, and arginine 212; that span reads DLKFHDIPNT. The Proton donor role is filled by lysine 64.

This sequence belongs to the OMP decarboxylase family. Type 1 subfamily. Homodimer.

It carries out the reaction orotidine 5'-phosphate + H(+) = UMP + CO2. It participates in pyrimidine metabolism; UMP biosynthesis via de novo pathway; UMP from orotate: step 2/2. Functionally, catalyzes the decarboxylation of orotidine 5'-monophosphate (OMP) to uridine 5'-monophosphate (UMP). This chain is Orotidine 5'-phosphate decarboxylase, found in Saccharophagus degradans (strain 2-40 / ATCC 43961 / DSM 17024).